Consider the following 676-residue polypeptide: Envelope glycoprotein (676 aa).

The first 34 residues, 1-34, serve as a signal peptide directing secretion; the sequence is MACSTLSKSPKDKIDPRDLLIPLILFLSLKGARS. A receptor-binding domain (RBD) region spans residues 35 to 270; sequence AAPGSSPHQV…KYQNLGPRVP (236 aa). The Extracellular segment spans residues 35–620; that stretch reads AAPGSSPHQV…FNRSPWFTTL (586 aa). Asn46 carries an N-linked (GlcNAc...) asparagine; by host glycan. 5 disulfides stabilise this stretch: Cys80-Cys132, Cys106-Cys121, Cys107-Cys117, Cys155-Cys175, and Cys167-Cys180. His89 is a binding site for Zn(2+). Asp120 contacts Zn(2+). The N-linked (GlcNAc...) asparagine; by host glycan is linked to Asn202. A disulfide bridge connects residues Cys212 and Cys218. Residues 287–322 form a disordered region; sequence NPLPKPAKSPSASNSTPTLISPSPAPTQPPPAGTGD. The span at 294–308 shows a compositional bias: low complexity; the sequence is KSPSASNSTPTLISP. The span at 309-318 shows a compositional bias: pro residues; the sequence is SPAPTQPPPA. Asn336 is a glycosylation site (N-linked (GlcNAc...) asparagine; by host). 6 disulfide bridges follow: Cys346–Cys349, Cys346–Cys573, Cys376–Cys430, Cys395–Cys407, Cys437–Cys450, and Cys565–Cys572. A CXXC motif is present at residues 346 to 349; the sequence is CWLC. N-linked (GlcNAc...) asparagine; by host glycosylation is found at Asn368 and Asn375. Residues Asn408 and Asn444 are each glycosylated (N-linked (GlcNAc...) asparagine; by host). Positions 482-502 are fusion peptide; the sequence is VSLTLALLLGGLTMGGIAAGV. Positions 513-547 form a coiled coil; the sequence is QQFQQLHAAVQDDLKEVEKSITNLEKSLTSLSEVV. Residues 548-564 are immunosuppression; that stretch reads LQNRRGLDLLFLKEGGL. Residues 565–573 carry the CX6CC motif; sequence CAALKEECC. Residues 621 to 641 form a helical membrane-spanning segment; it reads ISTIMGPLIILLLILLFGPCI. Cys640 is lipidated: S-palmitoyl cysteine; by host. The Cytoplasmic portion of the chain corresponds to 642–676; that stretch reads LNRLVQFVKDRISVVQALVLTQQYHQLKPLEYEPQ. A YXXL motif; contains endocytosis signal motif is present at residues 665–668; that stretch reads YHQL.

In terms of assembly, the mature envelope protein (Env) consists of a trimer of SU-TM heterodimers attached by a labile interchain disulfide bond. Specific enzymatic cleavages in vivo yield mature proteins. Envelope glycoproteins are synthesized as an inactive precursor that is N-glycosylated and processed likely by host cell furin or by a furin-like protease in the Golgi to yield the mature SU and TM proteins. The cleavage site between SU and TM requires the minimal sequence [KR]-X-[KR]-R. The R-peptide is released from the C-terminus of the cytoplasmic tail of the TM protein upon particle formation as a result of proteolytic cleavage by the viral protease. Cleavage of this peptide is required for TM to become fusogenic. In terms of processing, the CXXC motif is highly conserved across a broad range of retroviral envelope proteins. It is thought to participate in the formation of a labile disulfide bond possibly with the CX6CC motif present in the transmembrane protein. Isomerization of the intersubunit disulfide bond to an SU intrachain disulfide bond is thought to occur upon receptor recognition in order to allow membrane fusion. Post-translationally, the transmembrane protein is palmitoylated. The R-peptide is palmitoylated.

It localises to the virion membrane. The protein resides in the host cell membrane. The surface protein (SU) attaches the virus to the host cell by binding to its receptor. This interaction triggers the refolding of the transmembrane protein (TM) and is thought to activate its fusogenic potential by unmasking its fusion peptide. Fusion occurs at the host cell plasma membrane. Its function is as follows. The transmembrane protein (TM) acts as a class I viral fusion protein. Under the current model, the protein has at least 3 conformational states: pre-fusion native state, pre-hairpin intermediate state, and post-fusion hairpin state. During viral and target cell membrane fusion, the coiled coil regions (heptad repeats) assume a trimer-of-hairpins structure, positioning the fusion peptide in close proximity to the C-terminal region of the ectodomain. The formation of this structure appears to drive apposition and subsequent fusion of viral and target cell membranes. Membranes fusion leads to delivery of the nucleocapsid into the cytoplasm. In Mus musculus (Mouse), this protein is Envelope glycoprotein (env).